Consider the following 413-residue polypeptide: Putative competence-damage inducible protein (413 aa).

The protein belongs to the CinA family.

In Halothermothrix orenii (strain H 168 / OCM 544 / DSM 9562), this protein is Putative competence-damage inducible protein.